Reading from the N-terminus, the 168-residue chain is Crossover junction endodeoxyribonuclease RuvC (168 aa).

Catalysis depends on residues Asp9, Glu70, and Asp145. Residues Asp9, Glu70, and Asp145 each coordinate Mg(2+).

It belongs to the RuvC family. In terms of assembly, homodimer which binds Holliday junction (HJ) DNA. The HJ becomes 2-fold symmetrical on binding to RuvC with unstacked arms; it has a different conformation from HJ DNA in complex with RuvA. In the full resolvosome a probable DNA-RuvA(4)-RuvB(12)-RuvC(2) complex forms which resolves the HJ. It depends on Mg(2+) as a cofactor.

Its subcellular location is the cytoplasm. It catalyses the reaction Endonucleolytic cleavage at a junction such as a reciprocal single-stranded crossover between two homologous DNA duplexes (Holliday junction).. The RuvA-RuvB-RuvC complex processes Holliday junction (HJ) DNA during genetic recombination and DNA repair. Endonuclease that resolves HJ intermediates. Cleaves cruciform DNA by making single-stranded nicks across the HJ at symmetrical positions within the homologous arms, yielding a 5'-phosphate and a 3'-hydroxyl group; requires a central core of homology in the junction. The consensus cleavage sequence is 5'-(A/T)TT(C/G)-3'. Cleavage occurs on the 3'-side of the TT dinucleotide at the point of strand exchange. HJ branch migration catalyzed by RuvA-RuvB allows RuvC to scan DNA until it finds its consensus sequence, where it cleaves and resolves the cruciform DNA. The polypeptide is Crossover junction endodeoxyribonuclease RuvC (Chlamydia felis (strain Fe/C-56) (Chlamydophila felis)).